The sequence spans 69 residues: MVPPVQVSPLIKLGRYSALFLGVAYGATRYNYLKPRAEEERRIAAEEKKKQDELKRIARELAEDDSILK.

Lys-34 carries the post-translational modification N6-acetyllysine. Ser-66 is modified (phosphoserine).

This sequence belongs to the ATPase e subunit family. As to quaternary structure, component of the ATP synthase complex composed at least of ATP5F1A/subunit alpha, ATP5F1B/subunit beta, ATP5MC1/subunit c (homooctomer), MT-ATP6/subunit a, MT-ATP8/subunit 8, ATP5ME/subunit e, ATP5MF/subunit f, ATP5MG/subunit g, ATP5MK/subunit k, ATP5MJ/subunit j, ATP5F1C/subunit gamma, ATP5F1D/subunit delta, ATP5F1E/subunit epsilon, ATP5PF/subunit F6, ATP5PB/subunit b, ATP5PD/subunit d, ATP5PO/subunit OSCP. ATP synthase complex consists of a soluble F(1) head domain (subunits alpha(3) and beta(3)) - the catalytic core - and a membrane F(0) domain - the membrane proton channel (subunits c, a, 8, e, f, g, k and j). These two domains are linked by a central stalk (subunits gamma, delta, and epsilon) rotating inside the F1 region and a stationary peripheral stalk (subunits F6, b, d, and OSCP).

It is found in the mitochondrion. It localises to the mitochondrion inner membrane. In terms of biological role, subunit e, of the mitochondrial membrane ATP synthase complex (F(1)F(0) ATP synthase or Complex V) that produces ATP from ADP in the presence of a proton gradient across the membrane which is generated by electron transport complexes of the respiratory chain. ATP synthase complex consist of a soluble F(1) head domain - the catalytic core - and a membrane F(1) domain - the membrane proton channel. These two domains are linked by a central stalk rotating inside the F(1) region and a stationary peripheral stalk. During catalysis, ATP synthesis in the catalytic domain of F(1) is coupled via a rotary mechanism of the central stalk subunits to proton translocation. In vivo, can only synthesize ATP although its ATP hydrolase activity can be activated artificially in vitro. Part of the complex F(0) domain. This chain is ATP synthase F(0) complex subunit e, mitochondrial, found in Homo sapiens (Human).